We begin with the raw amino-acid sequence, 505 residues long: Lysine--tRNA ligase (505 aa).

Mg(2+) contacts are provided by Glu415 and Glu422.

It belongs to the class-II aminoacyl-tRNA synthetase family. In terms of assembly, homodimer. It depends on Mg(2+) as a cofactor.

The protein localises to the cytoplasm. The enzyme catalyses tRNA(Lys) + L-lysine + ATP = L-lysyl-tRNA(Lys) + AMP + diphosphate. The sequence is that of Lysine--tRNA ligase from Salmonella arizonae (strain ATCC BAA-731 / CDC346-86 / RSK2980).